Consider the following 133-residue polypeptide: ATP synthase epsilon chain, chloroplastic (133 aa).

This sequence belongs to the ATPase epsilon chain family. F-type ATPases have 2 components, CF(1) - the catalytic core - and CF(0) - the membrane proton channel. CF(1) has five subunits: alpha(3), beta(3), gamma(1), delta(1), epsilon(1). CF(0) has three main subunits: a, b and c.

Its subcellular location is the plastid. It localises to the chloroplast thylakoid membrane. Produces ATP from ADP in the presence of a proton gradient across the membrane. The protein is ATP synthase epsilon chain, chloroplastic of Lactuca sativa (Garden lettuce).